Consider the following 90-residue polypeptide: Phosphocarrier protein NPr (90 aa).

Residues 2–90 enclose the HPr domain; that stretch reads TVKQTVEISN…ALFNAGFDED (89 aa). His-16 (pros-phosphohistidine intermediate) is an active-site residue.

This sequence belongs to the HPr family.

It localises to the cytoplasm. Its function is as follows. Component of the phosphoenolpyruvate-dependent nitrogen-metabolic phosphotransferase system (nitrogen-metabolic PTS), that seems to be involved in regulating nitrogen metabolism. The phosphoryl group from phosphoenolpyruvate (PEP) is transferred to the phosphoryl carrier protein NPr by enzyme I-Ntr. Phospho-NPr then transfers it to EIIA-Ntr. Could function in the transcriptional regulation of sigma-54 dependent operons in conjunction with the NPr (PtsO) and EIIA-Ntr (PtsN) proteins. The sequence is that of Phosphocarrier protein NPr (ptsO) from Klebsiella oxytoca.